The primary structure comprises 693 residues: Phosphoribosylformylglycinamidine synthase subunit PurL (693 aa).

Histidine 34 is a catalytic residue. Residues tyrosine 37 and lysine 76 each contribute to the ATP site. Glutamate 78 provides a ligand contact to Mg(2+). Substrate is bound by residues serine 79–histidine 82 and arginine 101. Histidine 80 serves as the catalytic Proton acceptor. Aspartate 102 provides a ligand contact to Mg(2+). A substrate-binding site is contributed by glutamine 222. Aspartate 248 serves as a coordination point for Mg(2+). Position 292-294 (glutamate 292–glutamine 294) interacts with substrate. 2 residues coordinate ATP: aspartate 470 and glycine 507. Serine 510 provides a ligand contact to substrate.

Belongs to the FGAMS family. Monomer. Part of the FGAM synthase complex composed of 1 PurL, 1 PurQ and 2 PurS subunits.

The protein resides in the cytoplasm. It carries out the reaction N(2)-formyl-N(1)-(5-phospho-beta-D-ribosyl)glycinamide + L-glutamine + ATP + H2O = 2-formamido-N(1)-(5-O-phospho-beta-D-ribosyl)acetamidine + L-glutamate + ADP + phosphate + H(+). It functions in the pathway purine metabolism; IMP biosynthesis via de novo pathway; 5-amino-1-(5-phospho-D-ribosyl)imidazole from N(2)-formyl-N(1)-(5-phospho-D-ribosyl)glycinamide: step 1/2. Its function is as follows. Part of the phosphoribosylformylglycinamidine synthase complex involved in the purines biosynthetic pathway. Catalyzes the ATP-dependent conversion of formylglycinamide ribonucleotide (FGAR) and glutamine to yield formylglycinamidine ribonucleotide (FGAM) and glutamate. The FGAM synthase complex is composed of three subunits. PurQ produces an ammonia molecule by converting glutamine to glutamate. PurL transfers the ammonia molecule to FGAR to form FGAM in an ATP-dependent manner. PurS interacts with PurQ and PurL and is thought to assist in the transfer of the ammonia molecule from PurQ to PurL. The sequence is that of Phosphoribosylformylglycinamidine synthase subunit PurL from Pyrobaculum calidifontis (strain DSM 21063 / JCM 11548 / VA1).